Reading from the N-terminus, the 434-residue chain is Enolase (434 aa).

Ala41 provides a ligand contact to phosphoenolpyruvate. Gln165 contributes to the (2R)-2-phosphoglycerate binding site. Glu207 serves as the catalytic Proton donor. Mg(2+) is bound by residues Asp244, Glu291, and Asp318. Residues Lys343, Arg372, Ser373, and Lys394 each contribute to the phosphoenolpyruvate site. Lys343, Arg372, Ser373, and Lys394 together coordinate (2R)-2-phosphoglycerate. The active-site Proton acceptor is Lys343.

This sequence belongs to the enolase family. Homodimer and homooctamer; the homodimer is inactive. Mg(2+) is required as a cofactor.

It localises to the cytoplasm. It is found in the secreted. The protein localises to the cell surface. It catalyses the reaction (2R)-2-phosphoglycerate = phosphoenolpyruvate + H2O. Its pathway is carbohydrate degradation; glycolysis; pyruvate from D-glyceraldehyde 3-phosphate: step 4/5. Catalyzes the reversible conversion of 2-phosphoglycerate (2-PG) into phosphoenolpyruvate (PEP). It is essential for the degradation of carbohydrates via glycolysis. Functionally, 'Moonlights' as a laminin receptor. Binds laminin when expressed on the bacterial cell surface; this probably induces destruction of the extracellular matrix, favoring invasion and dissemination. The sequence is that of Enolase from Staphylococcus aureus.